Consider the following 32-residue polypeptide: ilv operon leader peptide (32 aa).

This Yersinia pestis protein is ilv operon leader peptide (ilvL).